Here is a 617-residue protein sequence, read N- to C-terminus: Hemagglutinin glycoprotein (617 aa).

Residues 1–37 (MSPQRDRINAFYKDNPHPKGSRIVINREHLMIDRPYV) lie on the Intravirion side of the membrane. The interval 1 to 154 (MSPQRDRINA…RIKLDYDQYC (154 aa)) is stalk. Residues 38-58 (LLAVLFVMFLSLIGLLAIAGI) traverse the membrane as a helical; Signal-anchor for type II membrane protein segment. The Virion surface portion of the chain corresponds to 59 to 617 (RLHRAAIYTA…VTREDGTNRR (559 aa)). N-linked (GlcNAc...) asparagine; by host glycans are attached at residues Asn168, Asn187, Asn200, Asn215, and Asn238. 5 cysteine pairs are disulfide-bonded: Cys188/Cys606, Cys287/Cys300, Cys381/Cys494, Cys386/Cys394, and Cys570/Cys579. The segment at 458–543 (PMKNLALGVI…VEHAVVYYVY (86 aa)) is interaction with host NECTIN4 receptor.

It belongs to the paramyxoviruses hemagglutinin-neuraminidase family. Non-sialidase subfamily. In terms of assembly, homodimer; disulfide-linked. Further forms homotetramer (dimer of dimers). Interacts (via C-terminus) with human NECTIN4 (via N-terminus); this interaction allows attachment to the respiratory epithelium and viral entry. Interacts (via C-terminus) with human SLAMF1/CD150 (via N-terminus); this interaction allows attachment and viral entry into the CD150-expressing immune cells. Interacts with human CD46 antigen; this interaction allows attachment and viral entry of vaccine and laboratory-adapted strains.

The protein resides in the virion membrane. It is found in the host cell membrane. In terms of biological role, attaches the virus to the human SLAMF1/CD150 receptor for entry into host dendritic cells, macrophages, activated memory T cells and naive or memory B cells, thereby explaining the long immunosuppression that follows infection. In the respiratory airways, binds to the NECTIN4 receptor for entry into the host cell. Binding of H protein to the receptor induces a conformational change that allows the F protein to trigger virion/cell membranes fusion. The vaccine and laboratory-adapted strains use host CD46 as an alternate receptor. The high degree of interaction between H and CD46 results in down-regulation of the latter from the surface of infected cells, rendering them more sensitive to c3b-mediated complement lysis. The polypeptide is Hemagglutinin glycoprotein (H) (Homo sapiens (Human)).